The chain runs to 241 residues: Ubiquinone biosynthesis O-methyltransferase (241 aa).

Residues R42, G62, D83, and M127 each contribute to the S-adenosyl-L-methionine site.

This sequence belongs to the methyltransferase superfamily. UbiG/COQ3 family.

It carries out the reaction a 3-demethylubiquinol + S-adenosyl-L-methionine = a ubiquinol + S-adenosyl-L-homocysteine + H(+). The catalysed reaction is a 3-(all-trans-polyprenyl)benzene-1,2-diol + S-adenosyl-L-methionine = a 2-methoxy-6-(all-trans-polyprenyl)phenol + S-adenosyl-L-homocysteine + H(+). It participates in cofactor biosynthesis; ubiquinone biosynthesis. Functionally, O-methyltransferase that catalyzes the 2 O-methylation steps in the ubiquinone biosynthetic pathway. This chain is Ubiquinone biosynthesis O-methyltransferase, found in Pectobacterium atrosepticum (strain SCRI 1043 / ATCC BAA-672) (Erwinia carotovora subsp. atroseptica).